A 301-amino-acid polypeptide reads, in one-letter code: RNA polymerase II holoenzyme cyclin-like subunit (301 aa).

The 90-residue stretch at 53 to 142 (QQLIKLGKRT…LGECEFALIS (90 aa)) folds into the Cyclin N-terminal domain.

Belongs to the cyclin family. Cyclin C subfamily. Component of the srb8-11 complex, a regulatory module of the Mediator complex.

It localises to the nucleus. Functionally, component of the srb8-11 complex. The srb8-11 complex is a regulatory module of the Mediator complex which is itself involved in regulation of basal and activated RNA polymerase II-dependent transcription. The srb8-11 complex may be involved in the transcriptional repression of a subset of genes regulated by Mediator. It may inhibit the association of the Mediator complex with RNA polymerase II to form the holoenzyme complex. The srb8-11 complex phosphorylates the C-terminal domain (CTD) of the largest subunit of RNA polymerase II. The sequence is that of RNA polymerase II holoenzyme cyclin-like subunit (ssn8) from Aspergillus terreus (strain NIH 2624 / FGSC A1156).